The following is a 183-amino-acid chain: Endoribonuclease AbiQ (183 aa).

Belongs to the ToxN/AbiQ toxin family. Forms a triangular heterohexamer with a single 35-nt-long repeat of RNA antitoxin AntiQ.

It localises to the cytoplasm. Functionally, toxic component of a type III toxin-antitoxin (TA) system. An endoribonuclease that is probably sequence-specific. It is neutralized by its cognate antitoxin RNA AntiQ, which has 2.8 35 nucleotide-long repeats. Cannot be cloned in L.lactis subsp. cremoris strain NZ9000 in the absence of the antitoxin gene; expression in strain NZ9000 even in the presence of antiQ inhibits growth in a bacteriostatic fashion. Confers resistance to 936 and c2 phages but not P335 phages in L.lactis, causes an abortive infection (Abi phenotype). Viral DNA is replicated but not cleaved from its concatemeric form, while the viral major structural protein is produced normally in the presence of this protein. Operon expression in E.coli confers resistance to 3 phages of the Myoviridae family (T4, RB69 and phage 2) and 1 of the Siphoviridae family (T5), but not other tested phages (T1, T3, lambda vir, HK97, Mu and pilH alpha). The presence of this operon in L.lactis subsp. lactis strain IL1403 during phage P008 infection alters the viral transcription profiles. This Lactococcus lactis subsp. lactis (Streptococcus lactis) protein is Endoribonuclease AbiQ.